We begin with the raw amino-acid sequence, 161 residues long: MORN repeat-containing protein 5 (161 aa).

3 MORN repeats span residues Tyr8–Ile30, Tyr31–Gln53, and Tyr54–His75.

Expressed in sperm (at protein level).

Its subcellular location is the cell projection. The protein localises to the cilium. It localises to the flagellum. The chain is MORN repeat-containing protein 5 (MORN5) from Homo sapiens (Human).